Reading from the N-terminus, the 160-residue chain is Negative modulator of initiation of replication (160 aa).

The protein belongs to the SeqA family. In terms of assembly, homodimer. Polymerizes to form helical filaments.

The protein localises to the cytoplasm. Functionally, negative regulator of replication initiation, which contributes to regulation of DNA replication and ensures that replication initiation occurs exactly once per chromosome per cell cycle. Binds to pairs of hemimethylated GATC sequences in the oriC region, thus preventing assembly of replication proteins and re-initiation at newly replicated origins. Repression is relieved when the region becomes fully methylated. This is Negative modulator of initiation of replication from Idiomarina loihiensis (strain ATCC BAA-735 / DSM 15497 / L2-TR).